Consider the following 684-residue polypeptide: Methionine--tRNA ligase (684 aa).

Positions Pro-17–His-27 match the 'HIGH' region motif. Cys-148, Cys-151, Cys-160, and Cys-164 together coordinate Zn(2+). The short motif at Thr-330–Ser-334 is the 'KMSKS' region element. Residue Lys-333 participates in ATP binding. The region spanning Asp-582 to His-684 is the tRNA-binding domain.

This sequence belongs to the class-I aminoacyl-tRNA synthetase family. MetG type 1 subfamily. As to quaternary structure, homodimer. It depends on Zn(2+) as a cofactor.

Its subcellular location is the cytoplasm. The catalysed reaction is tRNA(Met) + L-methionine + ATP = L-methionyl-tRNA(Met) + AMP + diphosphate. Its function is as follows. Is required not only for elongation of protein synthesis but also for the initiation of all mRNA translation through initiator tRNA(fMet) aminoacylation. The sequence is that of Methionine--tRNA ligase from Methanococcoides burtonii (strain DSM 6242 / NBRC 107633 / OCM 468 / ACE-M).